Reading from the N-terminus, the 325-residue chain is Neisseria adhesin A (325 aa).

Residues 1–23 (MKHFQSKVLTAAILAALSGSAMA) form the signal peptide. Positions 24 to 137 (DNPPPSTDEI…NTAAIGENKA (114 aa)) are head domain. Positions 86-135 (LKEVLAQHDQSLADLTGTVDENSEALVKTAEVVNDISADVKANTAAIGEN) form a coiled coil. The coiled stalk domain stretch occupies residues 139–231 (IAKKADQTAL…LASAEKSITE (93 aa)). The interval 232-270 (HGTRLNGLDRTVSDLRKETRQGLAEQAALSGLFQPYNVG) is outer membrane translocation of the passenger domain. 4 consecutive transmembrane segments (beta stranded) span residues 270-280 (GRFNVTAAVGG), 284-295 (ESAVAIGTGFRF), 302-308 (KAGVAVG), and 314-325 (SAAYHVGVNYEW). Residues 271-325 (RFNVTAAVGGYKSESAVAIGTGFRFTENFAAKAGVAVGTSSGSSAAYHVGVNYEW) form a translocator domain region.

It belongs to the autotransporter-2 (AT-2) (TC 1.B.40) family. In terms of assembly, homotrimer.

It is found in the cell surface. It localises to the cell outer membrane. Functionally, an antigenic bacterial cell surface protein that adheres to and induces bacterial uptake by human epithelial cells. In Neisseria meningitidis serogroup B, this protein is Neisseria adhesin A.